The chain runs to 827 residues: Stage II sporulation protein E (827 aa).

The next 10 membrane-spanning stretches (helical) occupy residues 49–69 (IGFL…ALPF), 71–91 (GAML…VLAG), 116–136 (VAAF…FFSM), 142–162 (GFVY…AIVE), 175–195 (QSLP…EEII), 206–226 (TGLA…ARYV), 247–267 (GLIL…LAFS), 269–289 (LLGG…LIVG), 299–319 (GSAG…LFLL), and 320–340 (TPQS…EHLQ). Topologically, residues 341–827 (EQQQYARKIR…AIFQNKQEIS (487 aa)) are cytoplasmic. One can recognise a PPM-type phosphatase domain in the interval 594–804 (STGAAHAAKG…DDMTVVVVRI (211 aa)).

The cofactor is Mn(2+).

The protein resides in the cell membrane. The catalysed reaction is O-phospho-L-seryl-[protein] + H2O = L-seryl-[protein] + phosphate. The enzyme catalyses O-phospho-L-threonyl-[protein] + H2O = L-threonyl-[protein] + phosphate. In terms of biological role, normally needed for pro-sigma E processing during sporulation but can be bypassed in vegetative cells. Activates SpoIIAA by dephosphorylation. This chain is Stage II sporulation protein E (spoIIE), found in Bacillus subtilis (strain 168).